The primary structure comprises 180 residues: V-type proton ATPase subunit c''1 (180 aa).

Topologically, residues 1 to 26 (MSGVVALGHASSWGAALVRISPYTFS) are lumenal. A helical membrane pass occupies residues 27 to 47 (AIGIAISIGVSVLGAAWGIYI). Residues 48–66 (TGSSLIGAAIEAPRITSKN) lie on the Cytoplasmic side of the membrane. A helical membrane pass occupies residues 67–87 (LISVIFCEAVAIYGVIVAIIL). The Lumenal portion of the chain corresponds to 88–110 (QTKLESVPSSKMYDAESLRAGYA). Residues 111–131 (IFASGIIVGFANLVCGLCVGI) traverse the membrane as a helical segment. Residues 132–149 (IGSSCALSDAQNSTLFVK) are Cytoplasmic-facing. The helical transmembrane segment at 150 to 170 (ILVIEIFGSALGLFGVIVGII) threads the bilayer. Residues 171 to 180 (MSAQATWPTK) are Lumenal-facing.

Belongs to the V-ATPase proteolipid subunit family. As to quaternary structure, V-ATPase is a heteromultimeric enzyme composed of a peripheral catalytic V1 complex (components A to H) attached to an integral membrane V0 proton pore complex (components: a, c, c'', d and e). The proteolipid components c and c'' are present as a hexameric ring that forms the proton-conducting pore. In terms of tissue distribution, preferentially expressed in roots.

It localises to the endoplasmic reticulum membrane. The protein localises to the golgi apparatus membrane. In terms of biological role, proton-conducting pore forming subunit of the membrane integral V0 complex of vacuolar ATPase. V-ATPase is responsible for acidifying a variety of intracellular compartments in eukaryotic cells. This is V-type proton ATPase subunit c''1 (VHA-c''1) from Arabidopsis thaliana (Mouse-ear cress).